A 527-amino-acid polypeptide reads, in one-letter code: Bifunctional purine biosynthesis protein PurH (527 aa).

One can recognise an MGS-like domain in the interval 1-149 (MASDFLPVRR…KNFARVAVAT (149 aa)).

Belongs to the PurH family.

The enzyme catalyses (6R)-10-formyltetrahydrofolate + 5-amino-1-(5-phospho-beta-D-ribosyl)imidazole-4-carboxamide = 5-formamido-1-(5-phospho-D-ribosyl)imidazole-4-carboxamide + (6S)-5,6,7,8-tetrahydrofolate. The catalysed reaction is IMP + H2O = 5-formamido-1-(5-phospho-D-ribosyl)imidazole-4-carboxamide. It functions in the pathway purine metabolism; IMP biosynthesis via de novo pathway; 5-formamido-1-(5-phospho-D-ribosyl)imidazole-4-carboxamide from 5-amino-1-(5-phospho-D-ribosyl)imidazole-4-carboxamide (10-formyl THF route): step 1/1. Its pathway is purine metabolism; IMP biosynthesis via de novo pathway; IMP from 5-formamido-1-(5-phospho-D-ribosyl)imidazole-4-carboxamide: step 1/1. This Xanthomonas oryzae pv. oryzae (strain MAFF 311018) protein is Bifunctional purine biosynthesis protein PurH.